We begin with the raw amino-acid sequence, 116 residues long: UPF0102 protein PERMA_0362 (116 aa).

The protein belongs to the UPF0102 family.

In Persephonella marina (strain DSM 14350 / EX-H1), this protein is UPF0102 protein PERMA_0362.